The sequence spans 118 residues: Large ribosomal subunit protein uL18 (118 aa).

Belongs to the universal ribosomal protein uL18 family. Part of the 50S ribosomal subunit; part of the 5S rRNA/L5/L18/L25 subcomplex. Contacts the 5S and 23S rRNAs.

Its function is as follows. This is one of the proteins that bind and probably mediate the attachment of the 5S RNA into the large ribosomal subunit, where it forms part of the central protuberance. The polypeptide is Large ribosomal subunit protein uL18 (Campylobacter lari (strain RM2100 / D67 / ATCC BAA-1060)).